A 488-amino-acid chain; its full sequence is UDP-glycosyltransferase 73B1 (488 aa).

Residues threonine 297, 356–358 (APQ), 373–381 (HCGWNSLLE), and 395–398 (GAEQ) each bind UDP-alpha-D-glucose.

The protein belongs to the UDP-glycosyltransferase family.

Functionally, possesses low quercetin 3-O-glucosyltransferase and 7-O-glucosyltransferase activities in vitro. The sequence is that of UDP-glycosyltransferase 73B1 (UGT73B1) from Arabidopsis thaliana (Mouse-ear cress).